The chain runs to 356 residues: Kelch domain-containing protein VC_1773 (356 aa).

4 Kelch repeats span residues 72-125, 163-210, 288-331, and 333-355; these read KLYV…SLSP, TIFM…HKNN, NLYA…ASNG, and AMYV…SLLM.

The protein is Kelch domain-containing protein VC_1773 of Vibrio cholerae serotype O1 (strain ATCC 39315 / El Tor Inaba N16961).